Consider the following 214-residue polypeptide: MNNLKRFTKSIFSCIALSGLLFLGGCETLPPMTDLSPITVDNAAQAKAWELQGKLAIRTPEDKLSANLYWRHSEERDELTLTTMLGTTVLTLEATPNSAHLHIDGKDFRDTNAQALLERVSGWSIPINDLPLWITGQIGSLDRVIAVDSAGQAKQLQNMQTPPPWLVTFLSWQSQSGAKVPYQLTLERGDLQLKLQLNQWQALGKPSILLGEKP.

Positions 1-25 (MNNLKRFTKSIFSCIALSGLLFLGG) are cleaved as a signal peptide. A lipid anchor (N-palmitoyl cysteine) is attached at Cys26. A lipid anchor (S-diacylglycerol cysteine) is attached at Cys26.

Belongs to the LolB family. In terms of assembly, monomer.

It localises to the cell outer membrane. Functionally, plays a critical role in the incorporation of lipoproteins in the outer membrane after they are released by the LolA protein. The protein is Outer-membrane lipoprotein LolB of Shewanella oneidensis (strain ATCC 700550 / JCM 31522 / CIP 106686 / LMG 19005 / NCIMB 14063 / MR-1).